The chain runs to 303 residues: RELT-like protein 2 (303 aa).

A helical transmembrane segment spans residues 15–35; that stretch reads LYMLFLLVLVFFLMGLVGFMI. 3 disordered regions span residues 47–68, 135–214, and 249–303; these read RTSR…DDVN, CSRS…QPRT, and PCTL…AGGM. Serine 52 carries the post-translational modification Phosphoserine. Composition is skewed to basic and acidic residues over residues 148 to 158 and 172 to 188; these read RSKEGKSRPRP and THIE…DGSP. Over residues 194 to 212 the composition is skewed to gly residues; sequence GSGGGQEPGGSQAAGGGQP. A compositionally biased stretch (polar residues) spans 274 to 295; sequence GLSSQEANGQPTKLDTSGQQES.

It belongs to the RELT family. As to quaternary structure, interacts with RELT, RELL1, OXSR1, PLSCR1 and TRAF2.

It is found in the cell membrane. Its function is as follows. Induces activation of MAPK14/p38 cascade, when overexpressed. Induces apoptosis, when overexpressed. This chain is RELT-like protein 2 (Rell2), found in Mus musculus (Mouse).